The following is a 275-amino-acid chain: NH(3)-dependent NAD(+) synthetase (275 aa).

46-53 (GISGGQDS) provides a ligand contact to ATP. Position 52 (Asp52) interacts with Mg(2+). Residue Arg140 coordinates deamido-NAD(+). Position 160 (Thr160) interacts with ATP. A Mg(2+)-binding site is contributed by Glu165. Deamido-NAD(+)-binding residues include Lys173 and Asp180. Residues Lys189 and Thr211 each coordinate ATP. 260-261 (HK) provides a ligand contact to deamido-NAD(+).

The protein belongs to the NAD synthetase family. Homodimer.

It catalyses the reaction deamido-NAD(+) + NH4(+) + ATP = AMP + diphosphate + NAD(+) + H(+). The protein operates within cofactor biosynthesis; NAD(+) biosynthesis; NAD(+) from deamido-NAD(+) (ammonia route): step 1/1. Functionally, catalyzes the ATP-dependent amidation of deamido-NAD to form NAD. Uses ammonia as a nitrogen source. The protein is NH(3)-dependent NAD(+) synthetase of Enterobacter sp. (strain 638).